A 603-amino-acid chain; its full sequence is UvrABC system protein C (603 aa).

The GIY-YIG domain occupies 15–92 (DKPGCYLMKN…IQKHQPYFNI (78 aa)). The UVR domain occupies 197–232 (ATVKRQLTKKMQRAAENMEFERAAEIRDQLHYIEVT).

It belongs to the UvrC family. Interacts with UvrB in an incision complex.

It is found in the cytoplasm. Its function is as follows. The UvrABC repair system catalyzes the recognition and processing of DNA lesions. UvrC both incises the 5' and 3' sides of the lesion. The N-terminal half is responsible for the 3' incision and the C-terminal half is responsible for the 5' incision. The protein is UvrABC system protein C of Limosilactobacillus reuteri (strain DSM 20016) (Lactobacillus reuteri).